We begin with the raw amino-acid sequence, 359 residues long: Adenosine deaminase (359 aa).

Zn(2+)-binding residues include H15 and H17. Residues H17, D19, and G184 each contribute to the substrate site. H213 provides a ligand contact to Zn(2+). The active-site Proton donor is E216. D295 contacts Zn(2+). A substrate-binding site is contributed by D296.

It belongs to the metallo-dependent hydrolases superfamily. Adenosine and AMP deaminases family. Requires Zn(2+) as cofactor.

Its subcellular location is the cell membrane. It localises to the cell junction. It is found in the cytoplasmic vesicle lumen. The protein resides in the cytoplasm. The protein localises to the lysosome. It carries out the reaction adenosine + H2O + H(+) = inosine + NH4(+). It catalyses the reaction 2'-deoxyadenosine + H2O + H(+) = 2'-deoxyinosine + NH4(+). Catalyzes the hydrolytic deamination of adenosine and 2-deoxyadenosine. Plays an important role in purine metabolism and in adenosine homeostasis. Modulates signaling by extracellular adenosine, and so contributes indirectly to cellular signaling events. May act as a positive regulator of T-cell coactivation. The protein is Adenosine deaminase (ada) of Danio rerio (Zebrafish).